Here is a 204-residue protein sequence, read N- to C-terminus: Holliday junction branch migration complex subunit RuvA (204 aa).

Residues 1 to 64 are domain I; it reads MIGKLKGTID…EDQLKLFGFM (64 aa). The domain II stretch occupies residues 65 to 143; it reads TALEREWFNL…AFAGEAINIG (79 aa). The flexible linker stretch occupies residues 144–151; the sequence is LKQELGEG. The domain III stretch occupies residues 152 to 204; that stretch reads VAAAPVADAVSALTNLGYSRDQAANAIAAAMKTAGEGADSAKLIRLGLKELAR.

The protein belongs to the RuvA family. Homotetramer. Forms an RuvA(8)-RuvB(12)-Holliday junction (HJ) complex. HJ DNA is sandwiched between 2 RuvA tetramers; dsDNA enters through RuvA and exits via RuvB. An RuvB hexamer assembles on each DNA strand where it exits the tetramer. Each RuvB hexamer is contacted by two RuvA subunits (via domain III) on 2 adjacent RuvB subunits; this complex drives branch migration. In the full resolvosome a probable DNA-RuvA(4)-RuvB(12)-RuvC(2) complex forms which resolves the HJ.

It is found in the cytoplasm. In terms of biological role, the RuvA-RuvB-RuvC complex processes Holliday junction (HJ) DNA during genetic recombination and DNA repair, while the RuvA-RuvB complex plays an important role in the rescue of blocked DNA replication forks via replication fork reversal (RFR). RuvA specifically binds to HJ cruciform DNA, conferring on it an open structure. The RuvB hexamer acts as an ATP-dependent pump, pulling dsDNA into and through the RuvAB complex. HJ branch migration allows RuvC to scan DNA until it finds its consensus sequence, where it cleaves and resolves the cruciform DNA. The chain is Holliday junction branch migration complex subunit RuvA from Rhizobium johnstonii (strain DSM 114642 / LMG 32736 / 3841) (Rhizobium leguminosarum bv. viciae).